Reading from the N-terminus, the 103-residue chain is Large ribosomal subunit protein bL21 (103 aa).

Belongs to the bacterial ribosomal protein bL21 family. Part of the 50S ribosomal subunit. Contacts protein L20.

This protein binds to 23S rRNA in the presence of protein L20. The protein is Large ribosomal subunit protein bL21 of Azoarcus sp. (strain BH72).